A 324-amino-acid chain; its full sequence is Acetyl-coenzyme A carboxylase carboxyl transferase subunit alpha (324 aa).

One can recognise a CoA carboxyltransferase C-terminal domain in the interval I37–Q291.

This sequence belongs to the AccA family. In terms of assembly, acetyl-CoA carboxylase is a heterohexamer composed of biotin carboxyl carrier protein (AccB), biotin carboxylase (AccC) and two subunits each of ACCase subunit alpha (AccA) and ACCase subunit beta (AccD).

It is found in the cytoplasm. The catalysed reaction is N(6)-carboxybiotinyl-L-lysyl-[protein] + acetyl-CoA = N(6)-biotinyl-L-lysyl-[protein] + malonyl-CoA. The protein operates within lipid metabolism; malonyl-CoA biosynthesis; malonyl-CoA from acetyl-CoA: step 1/1. Component of the acetyl coenzyme A carboxylase (ACC) complex. First, biotin carboxylase catalyzes the carboxylation of biotin on its carrier protein (BCCP) and then the CO(2) group is transferred by the carboxyltransferase to acetyl-CoA to form malonyl-CoA. The chain is Acetyl-coenzyme A carboxylase carboxyl transferase subunit alpha from Bacillus cereus (strain ATCC 14579 / DSM 31 / CCUG 7414 / JCM 2152 / NBRC 15305 / NCIMB 9373 / NCTC 2599 / NRRL B-3711).